The primary structure comprises 130 residues: Small ribosomal subunit protein uS9 (130 aa).

Residues 109–130 are disordered; that stretch reads RVKERKKYGQKGARAKFQFSKR.

The protein belongs to the universal ribosomal protein uS9 family.

The sequence is that of Small ribosomal subunit protein uS9 from Desulfotalea psychrophila (strain LSv54 / DSM 12343).